An 811-amino-acid chain; its full sequence is Potassium transporter 7 (811 aa).

Over 1-52 (MPSYQYLLSLLFYILDCTDRFSVIVTIHNHRVGVLMIVLLQDQWKSYCRTIS) the chain is Cytoplasmic. Residues 53-73 (LLAFQSFGVVYGDLSTSPLYV) form a helical membrane-spanning segment. Over 74–93 (YKSAFSGRLNNYRDETTIFG) the chain is Extracellular. A helical transmembrane segment spans residues 94–114 (LFSLIFWTLTLLPLLKYVIIV). Topologically, residues 115 to 181 (LNADDNGEGG…EKHRKLRTCL (67 aa)) are cytoplasmic. Residues 182-202 (LLFVLFGACMVIGDGVFTPAI) traverse the membrane as a helical segment. Over 203 to 217 (SVLSAISGLKDPGPG) the chain is Extracellular. Residues 218–238 (GIPDGWVVFIACIVLVGLFAL) traverse the membrane as a helical segment. The Cytoplasmic segment spans residues 239-245 (QHRGTHR). The helical transmembrane segment at 246 to 266 (VAFMFAPIVVVWLLSIGVIGL) threads the bilayer. The Extracellular segment spans residues 267-296 (YNIIHWNHRIFLALSPHYVIKFFKMTGKDG). A helical membrane pass occupies residues 297–317 (WLSLGGVLLAITGTEAMFADL). At 318-326 (GHFTAASIR) the chain is on the cytoplasmic side. Residues 327 to 347 (LAFVGAIYPCLVLQYMGQAAF) traverse the membrane as a helical segment. Residues 348 to 366 (LSRNMSAVEDSFYQSVPRS) are Extracellular-facing. The N-linked (GlcNAc...) asparagine glycan is linked to Asn-351. The chain crosses the membrane as a helical span at residues 367–387 (LFWPVFVIATLAAVVGSQSII). Residues 388-418 (SATFSIVKQCLSLGCFPRVKVVHTSRWIHGQ) lie on the Cytoplasmic side of the membrane. A helical membrane pass occupies residues 419-439 (IYIPEINWILMVLCLAVTLGF). Topologically, residues 440–450 (RDTTVIGNAYG) are extracellular. The helical transmembrane segment at 451–471 (LACIVVMFVTTWLMALVIIFV) threads the bilayer. Residues 472–475 (WQKN) lie on the Cytoplasmic side of the membrane. The chain crosses the membrane as a helical span at residues 476 to 496 (ILLALLFVVAFGSIEVVYLSA). Residues 497–503 (AVTKVPQ) are Extracellular-facing. Residues 504-524 (GGWAPIVFAFVFMLVMYVWHY) form a helical membrane-spanning segment. Over 525 to 811 (GSRRKYLFDL…LVEVGMIYYV (287 aa)) the chain is Cytoplasmic. Residues 680-702 (TGLVMRDSNNEASGTSLTRSSRS) form a disordered region.

Belongs to the HAK/KUP transporter (TC 2.A.72.3) family. Expressed in roots and shoots.

It is found in the membrane. Its function is as follows. High-affinity potassium transporter. In Oryza sativa subsp. japonica (Rice), this protein is Potassium transporter 7 (HAK7).